Here is a 62-residue protein sequence, read N- to C-terminus: Photosystem II reaction center protein Z (62 aa).

2 helical membrane-spanning segments follow: residues 8–28 (AVFA…VVFA) and 41–61 (FSGT…NSLI).

Belongs to the PsbZ family. In terms of assembly, PSII is composed of 1 copy each of membrane proteins PsbA, PsbB, PsbC, PsbD, PsbE, PsbF, PsbH, PsbI, PsbJ, PsbK, PsbL, PsbM, PsbT, PsbY, PsbZ, Psb30/Ycf12, at least 3 peripheral proteins of the oxygen-evolving complex and a large number of cofactors. It forms dimeric complexes.

It is found in the plastid. The protein resides in the chloroplast thylakoid membrane. In terms of biological role, may control the interaction of photosystem II (PSII) cores with the light-harvesting antenna, regulates electron flow through the 2 photosystem reaction centers. PSII is a light-driven water plastoquinone oxidoreductase, using light energy to abstract electrons from H(2)O, generating a proton gradient subsequently used for ATP formation. This is Photosystem II reaction center protein Z from Arabidopsis thaliana (Mouse-ear cress).